A 323-amino-acid polypeptide reads, in one-letter code: Dihydrodiol dehydrogenase 3 (323 aa).

Residues 20–24 (GFGTF) and Asp-50 each bind NADP(+). The active-site Proton donor is the Tyr-55. Substrate is bound at residue His-117. Residues 166–167 (SN), Gln-190, 216–221 (YGALGS), and 270–280 (KSYNKKRIKEN) each bind NADP(+).

Belongs to the aldo/keto reductase family.

The protein resides in the cytoplasm. This is Dihydrodiol dehydrogenase 3 from Bos taurus (Bovine).